The chain runs to 1413 residues: Alpha-latrocrustotoxin-Lt1a (1413 aa).

The propeptide occupies 1 to 28 (VSIFIFHFSANILVRNSEMKGKRVISKR). The interval 238–257 (ALFALFYGTQTFISIMFYLV) is helix H8 is the probable transmembrane region of the tetrameric pore inserted in the target cell membrane. ANK repeat units follow at residues 457 to 490 (DIHR…QVGA), 494 to 524 (MGRK…LLNV), 528 to 557 (NGYT…DVNV), 562 to 592 (NELT…DVNA), 596 to 625 (AGFT…GINI), 629 to 658 (SGLT…KVKL), 664 to 694 (NGMT…DVNA), 699 to 729 (KNWT…DIST), 733 to 762 (QAIT…VVDQ), 766 to 795 (NGFT…NINA), 799 to 828 (DGST…NIKA), 832 to 861 (INQM…SLMN), 866 to 895 (RDEY…DVNE), 899 to 928 (DGNT…DFRL), 965 to 995 (RGKT…TLNE), 996 to 1026 (DQCS…NPTA), 1031 to 1072 (NQVS…DINK), 1077 to 1106 (QQST…DPNK), 1109 to 1139 (RGDP…DVNT), and 1143 to 1172 (EQFT…DVNA). Residues 1193 to 1413 (RSLGRRFFRN…NRPTNVLQIK (221 aa)) constitute a propeptide that is removed on maturation.

It belongs to the cationic peptide 01 (latrotoxin) family. 01 (alpha-latrocrustotoxin) subfamily. As to quaternary structure, homotetramer in membranes. As to expression, expressed by the venom gland.

The protein resides in the secreted. The protein localises to the target cell membrane. Crustacean-selective presynaptic neurotoxin that induces neurotransmitter exocytosis. May bind to crustacean neurexin-1 homolog, adhesion G protein-coupled receptor L1 homolog, and receptor-type tyrosine-protein phosphatase S homolog, and induces neurotransmitter exocytosis both by forming tetrameric pores in membranes and signaling via G protein-coupled receptor. This recombinant protein form channels in artificial membrane bilayers, that are stabilized by calcium ions and allow calcium flux at negative membrane potentials. The chain is Alpha-latrocrustotoxin-Lt1a from Latrodectus tredecimguttatus (Mediterranean black widow spider).